Here is a 289-residue protein sequence, read N- to C-terminus: (3R)-3-[(carboxymethyl)amino]fatty acid oxygenase/decarboxylase (289 aa).

3 residues coordinate a (3R)-3-[(carboxymethyl)amino]fatty acid: tyrosine 65, tyrosine 70, and glycine 93. 2 residues coordinate Fe(2+): histidine 97 and aspartate 99. 2 residues coordinate a (3R)-3-[(carboxymethyl)amino]fatty acid: tyrosine 100 and lysine 158. Fe(2+) is bound at residue histidine 260. Histidine 264 contributes to the 2-oxoglutarate binding site. Position 275 (arginine 275) interacts with a (3R)-3-[(carboxymethyl)amino]fatty acid.

Belongs to the TfdA dioxygenase family. It depends on Fe(2+) as a cofactor.

It catalyses the reaction a (3R)-3-[(carboxymethyl)amino]fatty acid + 2 2-oxoglutarate + 2 O2 = a (3R)-3-isocyanyl-fatty acid + 2 succinate + 3 CO2 + 2 H2O. The enzyme catalyses a (3R)-3-[(carboxymethyl)amino]fatty acid + 2-oxoglutarate + O2 = a (3R)-3-{[carboxy(hydroxy)methyl]amino}fatty acid + succinate + CO2. The catalysed reaction is a (3R)-3-{[carboxy(hydroxy)methyl]amino}fatty acid + 2-oxoglutarate + O2 = a (3R)-3-isocyanyl-fatty acid + succinate + 2 CO2 + 2 H2O. Involved in the biosynthesis of a unique class of isonitrile lipopeptides (INLPs) that seem to play a role in metal acquisition. Catalyzes the conversion of (3R)-3-[(carboxymethyl)amino]fatty acids to (3R)-3-isocyanyl-fatty acids through an oxidative decarboxylation mechanism, thereby generating the isonitrile group of INLPs. This is (3R)-3-[(carboxymethyl)amino]fatty acid oxygenase/decarboxylase from Mycobacterium bovis (strain ATCC BAA-935 / AF2122/97).